We begin with the raw amino-acid sequence, 660 residues long: DNA mismatch repair protein MutL (660 aa).

A disordered region spans residues 414–433 (SSVKHASRPQNTFTETDHPN).

The protein belongs to the DNA mismatch repair MutL/HexB family.

Its function is as follows. This protein is involved in the repair of mismatches in DNA. It is required for dam-dependent methyl-directed DNA mismatch repair. May act as a 'molecular matchmaker', a protein that promotes the formation of a stable complex between two or more DNA-binding proteins in an ATP-dependent manner without itself being part of a final effector complex. In Streptococcus pyogenes serotype M6 (strain ATCC BAA-946 / MGAS10394), this protein is DNA mismatch repair protein MutL.